A 435-amino-acid polypeptide reads, in one-letter code: 5-hydroxybenzimidazole synthase (435 aa).

Substrate contacts are provided by residues M95, Y124, H163, S186 to G188, N227 to R230, and E266. H270 serves as a coordination point for Zn(2+). Residue Y293 participates in substrate binding. H334 is a binding site for Zn(2+). Residues C410, C413, and C417 each coordinate [4Fe-4S] cluster.

The protein belongs to the ThiC family. 5-hydroxybenzimidazole synthase subfamily. As to quaternary structure, homodimer. The cofactor is [4Fe-4S] cluster.

It catalyses the reaction 5-amino-1-(5-phospho-beta-D-ribosyl)imidazole + AH2 + S-adenosyl-L-methionine = 5-hydroxybenzimidazole + 5'-deoxyadenosine + formate + L-methionine + A + NH4(+) + phosphate + 2 H(+). In terms of biological role, catalyzes the conversion of aminoimidazole ribotide (AIR) to 5-hydroxybenzimidazole (5-HBI) in a radical S-adenosyl-L-methionine (SAM)-dependent reaction. Is thus involved in the anaerobic biosynthesis of the benzimidazole lower axial ligand of the cobamide produced by G.sulfurreducens. This Geobacter sulfurreducens (strain ATCC 51573 / DSM 12127 / PCA) protein is 5-hydroxybenzimidazole synthase.